The sequence spans 282 residues: Protease HtpX homolog (282 aa).

A run of 2 helical transmembrane segments spans residues 7–26 (TTVL…GAVG) and 30–49 (GMMI…YWFS). Histidine 131 contributes to the Zn(2+) binding site. The active site involves glutamate 132. A Zn(2+)-binding site is contributed by histidine 135. The next 2 helical transmembrane spans lie at 141-161 (ILVS…ARMA) and 183-203 (LGLV…QLAI). Glutamate 208 serves as a coordination point for Zn(2+).

Belongs to the peptidase M48B family. Zn(2+) is required as a cofactor.

The protein resides in the cell inner membrane. This Syntrophobacter fumaroxidans (strain DSM 10017 / MPOB) protein is Protease HtpX homolog.